A 282-amino-acid chain; its full sequence is Pantothenate synthetase (282 aa).

30–37 (MGNLHEGH) provides a ligand contact to ATP. His37 functions as the Proton donor in the catalytic mechanism. Gln61 serves as a coordination point for (R)-pantoate. Gln61 contributes to the beta-alanine binding site. 148 to 151 (GQKD) contributes to the ATP binding site. Position 154 (Gln154) interacts with (R)-pantoate. ATP contacts are provided by residues Val177 and 185-188 (LSSR).

The protein belongs to the pantothenate synthetase family. Homodimer.

The protein resides in the cytoplasm. The catalysed reaction is (R)-pantoate + beta-alanine + ATP = (R)-pantothenate + AMP + diphosphate + H(+). Its pathway is cofactor biosynthesis; (R)-pantothenate biosynthesis; (R)-pantothenate from (R)-pantoate and beta-alanine: step 1/1. Catalyzes the condensation of pantoate with beta-alanine in an ATP-dependent reaction via a pantoyl-adenylate intermediate. This Acinetobacter baumannii (strain AB0057) protein is Pantothenate synthetase.